The sequence spans 277 residues: Bifunctional protein FolD (277 aa).

Residues 164-166 (GRS), Ser-189, and Thr-230 each bind NADP(+).

This sequence belongs to the tetrahydrofolate dehydrogenase/cyclohydrolase family. As to quaternary structure, homodimer.

The enzyme catalyses (6R)-5,10-methylene-5,6,7,8-tetrahydrofolate + NADP(+) = (6R)-5,10-methenyltetrahydrofolate + NADPH. It carries out the reaction (6R)-5,10-methenyltetrahydrofolate + H2O = (6R)-10-formyltetrahydrofolate + H(+). It participates in one-carbon metabolism; tetrahydrofolate interconversion. In terms of biological role, catalyzes the oxidation of 5,10-methylenetetrahydrofolate to 5,10-methenyltetrahydrofolate and then the hydrolysis of 5,10-methenyltetrahydrofolate to 10-formyltetrahydrofolate. The protein is Bifunctional protein FolD of Clostridium perfringens (strain ATCC 13124 / DSM 756 / JCM 1290 / NCIMB 6125 / NCTC 8237 / Type A).